A 414-amino-acid chain; its full sequence is Glyceraldehyde-3-phosphate dehydrogenase, chloroplastic (414 aa).

A chloroplast-targeting transit peptide spans 1-76; it reads MAFVAPVATV…GIVAATFGPT (76 aa). NADP(+)-binding positions include 88-89, Asp112, and Arg156; that span reads RI. Residues 230–232, Thr261, Arg276, 289–290, and Arg312 contribute to the D-glyceraldehyde 3-phosphate site; these read SCT and TG. Residue Cys231 is the Nucleophile of the active site. Asn394 serves as a coordination point for NADP(+).

Belongs to the glyceraldehyde-3-phosphate dehydrogenase family. As to quaternary structure, homotetramer.

The protein localises to the plastid. The protein resides in the chloroplast. It carries out the reaction D-glyceraldehyde 3-phosphate + phosphate + NADP(+) = (2R)-3-phospho-glyceroyl phosphate + NADPH + H(+). The protein operates within carbohydrate biosynthesis; Calvin cycle. This Chondrus crispus (Carrageen Irish moss) protein is Glyceraldehyde-3-phosphate dehydrogenase, chloroplastic (GAPA).